The sequence spans 228 residues: MKLSKDTTALLKNFATINSGIMLKSGQFIMTRAVNGTTYAEANISDVIDFDVAIYDLNGFLGILSLVNDDAEISQSEDGNIKIADARSTIFWPAADPSTVVAPNKPIPFPVASAVTEIKAEDLQQLLRVSRGLQIDTIAITVKEGKIVINGFNKVEDSALTRVKYSLTLGDYDGENTFNFIINMANMKMQPGNYKLLLWAKGKQGAAKFEGEHANYVVALEADSTHDF.

The protein belongs to the Tevenvirinae sliding clamp family. In terms of assembly, homotrimer. Interacts with the viral DNA polymerase; this interaction constitutes the polymerase holoenzyme. Interacts with the sliding-clamp-loader; this interaction allows the sliding-clamp-loader to open the sliding clamp. Interacts with the viral DNA ligase. Part of the replicase complex that includes the DNA polymerase, the polymerase clamp, the clamp loader complex, the single-stranded DNA binding protein, the primase, the helicase and the helicase assembly factor. Interacts with the viral RNA polymerase (RNAP). Part of the transcription activation complex containing host RNAP, the viral RNA polymerase sigma-like factor, the late transcription coactivator, and the sliding clamp.

Its function is as follows. Sliding clamp that encircles the genomic DNA and links the DNA polymerase to the template to control the processivity of DNA synthesis. Responsible for tethering the catalytic subunit of DNA polymerase to DNA during high-speed replication. Interaction with the sliding-clamp-loader opens the sliding clamp so that it can be loaded around the DNA template. During transcription, encircles the DNA and tethers host RNA polymerase (RNAP) to it. The polypeptide is Sliding clamp (45) (Escherichia coli (Bacteriophage T4)).